The chain runs to 348 residues: Sesquiterpene synthase MGU_11447 (348 aa).

Mg(2+) is bound by residues aspartate 91 and aspartate 96. The DDXXXD motif motif lies at 91 to 96; sequence DDLFVD. Arginine 184 is a binding site for substrate. Residues asparagine 230, serine 234, and glutamate 238 each coordinate Mg(2+).

Belongs to the terpene synthase family. Mg(2+) is required as a cofactor.

The enzyme catalyses (2E,6E)-farnesyl diphosphate + H2O = (+)-corvol ether B + diphosphate. It catalyses the reaction (2E,6E)-farnesyl diphosphate + H2O = (+)-corvol ether A + diphosphate. Its function is as follows. Terpene synthase that catalyzes the conversion of (2E,6E)-farnesyl diphosphate (FPP) into sesquiterpenes which are important for fungi-environment interactions. Produces a mixture consisting of 8 sesquiterpenes including corvol ethers A and B, as well as traces of epizonarene, gamma-cadinene, delta-cadinene, alpha-cadinene, alpha-cadinol, and an unidentified sesquiterpene. Produces both corvol ether A and corvol ether B in similar concentrations. This chain is Sesquiterpene synthase MGU_11447, found in Metarhizium guizhouense (strain ARSEF 977).